The following is a 921-amino-acid chain: Dual serine/threonine and tyrosine protein kinase (921 aa).

The 255-residue stretch at 645-899 folds into the Protein kinase domain; sequence PKLGRELGRG…PLLGIVEPSL (255 aa). ATP contacts are provided by residues 651-659 and Lys674; that span reads LGRGQYGVV. Residue Asp770 is the Proton acceptor of the active site.

It belongs to the protein kinase superfamily. Ser/Thr protein kinase family.

The protein localises to the cytoplasm. It is found in the cell membrane. It localises to the apical cell membrane. The protein resides in the basolateral cell membrane. Its subcellular location is the cell junction. The catalysed reaction is L-seryl-[protein] + ATP = O-phospho-L-seryl-[protein] + ADP + H(+). It carries out the reaction L-threonyl-[protein] + ATP = O-phospho-L-threonyl-[protein] + ADP + H(+). It catalyses the reaction L-tyrosyl-[protein] + ATP = O-phospho-L-tyrosyl-[protein] + ADP + H(+). May act as a positive regulator of ERK phosphorylation downstream of fibroblast growth factor-receptor activation. May induce both caspase-dependent apoptosis and caspase-independent cell death. May play a role in the embryonic development. The protein is Dual serine/threonine and tyrosine protein kinase (dstyk) of Takifugu rubripes (Japanese pufferfish).